The sequence spans 247 residues: Geranylgeranylglyceryl phosphate synthase (247 aa).

Residues Asp24 and Ser53 each contribute to the Mg(2+) site. Residues 172 to 178 (YLEAGSG), 203 to 204 (GG), and 225 to 226 (GT) each bind sn-glycerol 1-phosphate.

This sequence belongs to the GGGP/HepGP synthase family. Group II subfamily. The cofactor is Mg(2+).

It is found in the cytoplasm. The enzyme catalyses sn-glycerol 1-phosphate + (2E,6E,10E)-geranylgeranyl diphosphate = sn-3-O-(geranylgeranyl)glycerol 1-phosphate + diphosphate. The protein operates within membrane lipid metabolism; glycerophospholipid metabolism. Its function is as follows. Prenyltransferase that catalyzes the transfer of the geranylgeranyl moiety of geranylgeranyl diphosphate (GGPP) to the C3 hydroxyl of sn-glycerol-1-phosphate (G1P). This reaction is the first ether-bond-formation step in the biosynthesis of archaeal membrane lipids. The chain is Geranylgeranylglyceryl phosphate synthase from Cenarchaeum symbiosum (strain A).